The following is a 260-amino-acid chain: HTH-type transcriptional repressor NanR (260 aa).

The HTH gntR-type domain occupies 27–95; that stretch reads KKLSDMVEEE…NGERARVSMP (69 aa). A DNA-binding region (H-T-H motif) is located at residues 55-74; the sequence is ERELMEFFNVGRPSVREALA.

Belongs to the NanR family.

In terms of biological role, transcriptional repressor that controls expression of the genes required for the catabolism of sialic acids. In Enterobacter sp. (strain 638), this protein is HTH-type transcriptional repressor NanR.